Reading from the N-terminus, the 122-residue chain is uncharacterized protein (122 aa).

Helical transmembrane passes span 36-56 (SVRSIIVVNILVFAGILYSQF) and 72-92 (AVFLFICPCLLYFYQGIFSTD).

Its subcellular location is the membrane. This is an uncharacterized protein from Saccharomyces cerevisiae (strain ATCC 204508 / S288c) (Baker's yeast).